The primary structure comprises 84 residues: Acyl carrier protein MbtL (84 aa).

The 76-residue stretch at 6–81 folds into the Carrier domain; that stretch reads STVSTTLLSI…ELEAAIAAKY (76 aa). An O-(pantetheine 4'-phosphoryl)serine modification is found at S41.

Post-translationally, 4'-phosphopantetheine is transferred from CoA to a specific serine of apo-ACP, leading to the activated holo-ACP form.

It localises to the cytoplasm. The protein operates within siderophore biosynthesis; mycobactin biosynthesis. Acyl carrier protein involved in the formation of acyl-S-ACP intermediates within the mycobactin biosynthesis process. The aliphatic chains carried by ACP are subsequently transferred on to the mycobactin core by MbtK. The sequence is that of Acyl carrier protein MbtL (mbtL) from Mycobacterium bovis (strain ATCC BAA-935 / AF2122/97).